A 274-amino-acid chain; its full sequence is 2,3,4,5-tetrahydropyridine-2,6-dicarboxylate N-succinyltransferase (274 aa).

Positions 104 and 141 each coordinate substrate.

This sequence belongs to the transferase hexapeptide repeat family. Homotrimer.

The protein resides in the cytoplasm. It carries out the reaction (S)-2,3,4,5-tetrahydrodipicolinate + succinyl-CoA + H2O = (S)-2-succinylamino-6-oxoheptanedioate + CoA. It participates in amino-acid biosynthesis; L-lysine biosynthesis via DAP pathway; LL-2,6-diaminopimelate from (S)-tetrahydrodipicolinate (succinylase route): step 1/3. This Escherichia coli O6:H1 (strain CFT073 / ATCC 700928 / UPEC) protein is 2,3,4,5-tetrahydropyridine-2,6-dicarboxylate N-succinyltransferase.